We begin with the raw amino-acid sequence, 1077 residues long: MVPYFEMAAASNFSFLCGASHPQELVERAHALDLSGIGIADRNTLAGVVRAHAQWKDIRKESGFRLFIGCRLSFIDGTPDMVVYPRDRAAYGQLCRLLTEGKHRAAIKGECHLEWADLLFRARQFQIAVFPPDEDEPDFAARLTEIAQAAPGSVWLALTMPHQGQDGRRAERIARFAAQAGVPLIATNDVLYHHPDRRPLQDVLTATRHHTTVFAAGRLLEKNAERHLKPPHEMVRLFRDYPEAIAATADFVAPITFQLDELKYAYPDEPIPPGKTAQQHLYDLVWEGAARHYGADIIPPKVQGLINKELALIARLEYEPYFLTVYDIVTHAREKGILCQGRGSAANSVVCFCLGITGVNPTQVDLLFERFISAERKEPPDIDVDFEHERREEVMQYVYDRYSRDRAAIVATVISYRSRSAIRDVGKALGLSEDVTAALANTVWGLSGGGIDRQHIRQAGLDPDNPIIQRAVELAITLIGFPRHLSQHVGGFVLARDRLDETVPIGPAAMDKRSFIEWDKDDIDEVGLMKVDVLSLGMLTCIRKAFDLIHQHKPQLYGGEKLTLASLPREDKAVYDMLCKGDSLGVFQVESRAQMNMLPRLRPQEFYDLVIEVAIVRPGPIQGDMVHPYLRRRSGQEPCTLPSPSPQHGPANELQQILGKTKGVPLFQEQAMRIAMEAAKFTPEEANQLRRAMATFRKMGTIHTMEKKMIDGMVNRGYDRTFAENCFNQIKGFGEYGFPESHAASFAHLVYISAWLKCHHPEVFAAALLNSQPMVFYAPAQIVRDAREHGVTVLPVDVNFSQWDNILEETPDVHLALRLGFRQIDGFSKRDTELLIADRQEPYRTIEDMHRRLRLDRRAFTLLADADAFGSLDIDRRAALWAVRRLPNDETLPLFRAAAASELAQEPRTKLPEMAASEHVIADYETTRLSLKGHPLQYLREGLAAEGVSTCRAVQEGADGRRMKVAGVVTVRQRPGSAKGVVFLTIEDETGIANIVIWPKIMKVFRREVMSARLIHIEGRIQRSLEGVVHLVAAKLQDRSAALIEMSGREAQRLIAPSQMAHHPRNVRVMPNSRDFH.

This sequence belongs to the DNA polymerase type-C family. DnaE2 subfamily.

The protein resides in the cytoplasm. It carries out the reaction DNA(n) + a 2'-deoxyribonucleoside 5'-triphosphate = DNA(n+1) + diphosphate. In terms of biological role, DNA polymerase involved in damage-induced mutagenesis and translesion synthesis (TLS). It is not the major replicative DNA polymerase. The polypeptide is Error-prone DNA polymerase (Brucella suis biovar 1 (strain 1330)).